The following is a 310-amino-acid chain: Basic salivary proline-rich protein 4 (310 aa).

The N-terminal stretch at 1-16 (MLLILLSVALLALSSA) is a signal peptide. The tract at residues 14–310 (SSAESSSEDV…RPAQGQQPPQ (297 aa)) is disordered. A run of 9 repeats spans residues 35–55 (KPEG…PPPG), 56–76 (KPQG…PPPG), 77–97 (KPEG…PHPG), 98–118 (KPER…PHPG), 119–139 (KPES…PTPG), 140–160 (KPEG…PPPG), 161–181 (KPEG…PHPG), 182–202 (KPER…PPPG), and 203–223 (KPER…PHPG). Positions 35-234 (KPEGRRPQGG…PEGPPPQEGN (200 aa)) are 9.5 X 21 AA tandem repeats of K-P-[EQ]-[GR]-[PR]-[PR]-P-Q-G-G-N-Q-[PS]-[QH]-[RG]-[PT]-P-P-[PH]-P-G. A compositionally biased stretch (pro residues) spans 48–63 (QRPPPPPGKPQGPPPQ). Residues N66, N87, and N108 are each glycosylated (N-linked (GlcNAc...) asparagine). Pro residues predominate over residues 133–147 (GPPPTPGKPEGPPPQ). Residues N150, N171, and N192 are each glycosylated (N-linked (GlcNAc...) asparagine). Pro residues predominate over residues 196–210 (RPPPPPGKPERPPPQ). N213 carries N-linked (GlcNAc...) asparagine glycosylation. A compositionally biased stretch (pro residues) spans 217–231 (GPPPHPGKPEGPPPQ). The 10; truncated repeat unit spans residues 224–234 (KPEGPPPQEGN). An N-linked (GlcNAc...) asparagine glycan is attached at N234. Positions 258 to 310 (QGPPPPGKPQGPPPAGGNPQQPQAPPAGKPQGPPPPPQGGRPPRPAQGQQPPQ) are enriched in pro residues.

N-glycosylated. Post-translationally, proteolytically cleaved at the tripeptide Xaa-Pro-Gln, where Xaa in the P(3) position is mostly lysine. The endoprotease may be of microbial origin. Pyroglutamate formation found on at least Gln-46, Gln-48, Gln-67, Gln-88; Gln-90; Gln-193; Gln-288 Gln-214 and Gln-295, preferentially in diabetic, and head and neck cancer patients.

The protein localises to the secreted. This Homo sapiens (Human) protein is Basic salivary proline-rich protein 4 (PRB4).